A 553-amino-acid polypeptide reads, in one-letter code: 5'-nucleotidase domain-containing protein 2 (553 aa).

Residues 26 to 51 (SSSPSCPGCGPPGPGAHCPSTPRSAP) are disordered. Asp-106 functions as the Nucleophile in the catalytic mechanism. Mg(2+) contacts are provided by Asp-106, Asp-108, and Asp-391. The active-site Proton donor is the Asp-108.

Belongs to the 5'(3')-deoxyribonucleotidase family. Interacts with tyrosine 3-monooxygenase TH; the interaction results in reduced phosphorylation and decreased catalytic activity of TH. In terms of tissue distribution, expressed in eye iridocorneal angle.

Its subcellular location is the cytoplasm. In terms of biological role, promotes dephosphorylation of tyrosine 3-monooxygenase TH which decreases TH catalytic activity and leads to reduced synthesis of catecholamines including dopamine, noradrenaline and adrenaline. The exact mechanism of activity is unknown but may act as a phosphatase or promote the activity of phosphatases or may inhibit phosphorylation by acting as a barrier to interfere with protein kinase access. The polypeptide is 5'-nucleotidase domain-containing protein 2 (Nt5dc2) (Rattus norvegicus (Rat)).